A 294-amino-acid chain; its full sequence is Cytidine deaminase (294 aa).

CMP/dCMP-type deaminase domains follow at residues 48–168 (DEDA…FGPK) and 186–294 (LTGD…VLLG). Residue 89 to 91 (NME) participates in substrate binding. H102 lines the Zn(2+) pocket. Residue E104 is the Proton donor of the active site. 2 residues coordinate Zn(2+): C129 and C132.

This sequence belongs to the cytidine and deoxycytidylate deaminase family. In terms of assembly, homodimer. Zn(2+) is required as a cofactor.

It catalyses the reaction cytidine + H2O + H(+) = uridine + NH4(+). It carries out the reaction 2'-deoxycytidine + H2O + H(+) = 2'-deoxyuridine + NH4(+). Its function is as follows. This enzyme scavenges exogenous and endogenous cytidine and 2'-deoxycytidine for UMP synthesis. This is Cytidine deaminase from Salmonella choleraesuis (strain SC-B67).